Here is a 341-residue protein sequence, read N- to C-terminus: 2-acylglycerol O-acyltransferase 3 (341 aa).

2 helical membrane passes run 29 to 49 (YVLT…VLLF) and 50 to 70 (TSLW…WDTP). N126 is a glycosylation site (N-linked (GlcNAc...) asparagine). The helical transmembrane segment at 137-157 (LFPGLRPWLAVLAGLFYLPVY) threads the bilayer.

It belongs to the diacylglycerol acyltransferase family. Ubiquitinated. Ubiquitination leads to proteasomal degradation. As to expression, selectively expressed in the digestive system. Highly expressed in the ileum, and at lower level in jejunum, duodenum, colon, cecum and the rectum. Not expressed in the stomach and the esophagus and trachea. Expressed at very low level in liver.

Its subcellular location is the endoplasmic reticulum membrane. The protein localises to the cytoplasm. It is found in the perinuclear region. The enzyme catalyses a 2-acylglycerol + an acyl-CoA = a 1,2-diacylglycerol + CoA. The catalysed reaction is an acyl-CoA + a 1,2-diacyl-sn-glycerol = a triacyl-sn-glycerol + CoA. It catalyses the reaction 2-(9Z-octadecenoyl)-glycerol + (9Z)-octadecenoyl-CoA = 1,2-di-(9Z-octadecenoyl)-sn-glycerol + CoA. It carries out the reaction 2-(9Z-octadecenoyl)-glycerol + hexadecanoyl-CoA = 1-hexadecanoyl-2-(9Z-octadecenoyl)-sn-glycerol + CoA. The enzyme catalyses 1,2-di-(9Z-octadecenoyl)-sn-glycerol + (9Z)-octadecenoyl-CoA = 1,2,3-tri-(9Z-octadecenoyl)-glycerol + CoA. The catalysed reaction is 1-hexadecanoyl-2-(9Z-octadecenoyl)-sn-glycerol + hexadecanoyl-CoA = 1,3-dihexadecanoyl-2-(9Z-octadecenoyl)glycerol + CoA. It catalyses the reaction all-trans-retinol + hexadecanoyl-CoA = all-trans-retinyl hexadecanoate + CoA. It carries out the reaction 1-O-(9Z-octadecenyl)-glycerol + (9Z)-octadecenoyl-CoA = 1-O-(9Z-octadecyl)-3-(9Z-octadecenoyl)-glycerol + CoA. The enzyme catalyses 1-O-(9Z-octadecyl)-3-(9Z-octadecenoyl)-glycerol + (9Z)-octadecenoyl-CoA = 1-O-(9Z-octadecenyl)-2,3-di-(9Z-octadecenoyl)glycerol + CoA. The protein operates within glycerolipid metabolism; triacylglycerol biosynthesis. In terms of biological role, catalyzes the formation of diacylglycerol from 2-monoacylglycerol and fatty acyl-CoA. Also able to catalyze the terminal step in triacylglycerol synthesis by using diacylglycerol and fatty acyl-CoA as substrates. Has a preference toward palmitoyl-CoA and oleoyl-CoA. May be involved in absorption of dietary fat in the small intestine by catalyzing the resynthesis of triacylglycerol in enterocytes. Also able to use 1-monoalkylglycerol (1-MAkG) as an acyl acceptor for the synthesis of monoalkyl-monoacylglycerol (MAMAG). This Homo sapiens (Human) protein is 2-acylglycerol O-acyltransferase 3.